Reading from the N-terminus, the 161-residue chain is Large ribosomal subunit protein uL10 (161 aa).

It belongs to the universal ribosomal protein uL10 family. Part of the ribosomal stalk of the 50S ribosomal subunit. The N-terminus interacts with L11 and the large rRNA to form the base of the stalk. The C-terminus forms an elongated spine to which L12 dimers bind in a sequential fashion forming a multimeric L10(L12)X complex.

Functionally, forms part of the ribosomal stalk, playing a central role in the interaction of the ribosome with GTP-bound translation factors. This Wigglesworthia glossinidia brevipalpis protein is Large ribosomal subunit protein uL10 (rplJ).